We begin with the raw amino-acid sequence, 354 residues long: MKILTIIGARPQFIKASVVSKAIIEQQTLSEIIVHTGQHFDANMSEIFFEQLGIPKPDYQLDIHGGTHGQMTGRMLMEIEDVILKEKPHRVLVYGDTNSTLAGALAASKLHVPIAHIEAGLRSFNMRMPEEINRILTDQVSDILFCPTRVAIDNLKNEGFERKAAKIVNVGDVMQDSALFFAQRATSPIGLASQDGFILATLHRAENTDDPVRLTSIVEALNEIQINVAPVVLPLHPRTRGVIERLGLKLEVQVIDPVGYLEMIWLLQRSGLVLTDSGGVQKEAFFFGKPCVTMRDQTEWVELVTCGANVLVGAARDMIVESARTSLGKTIQDDGQLYGGGQASSRIAEYLAKL.

Belongs to the UDP-N-acetylglucosamine 2-epimerase family.

It carries out the reaction UDP-2,3-diacetamido-2,3-dideoxy-alpha-D-glucuronate = UDP-2,3-diacetamido-2,3-dideoxy-alpha-D-mannuronate. It participates in bacterial outer membrane biogenesis; LPS O-antigen biosynthesis. Functionally, plays a role in the biosynthesis of B-band O antigen for serotype O5. Catalyzes the epimerization of UDP-2,3-diacetamido-2,3-dideoxy-alpha-D-glucuronic acid (UDP-alpha-D-GlcNAc3NAcA) to UDP-2,3-diacetamido-2,3-dideoxy-alpha-D-mannuronic acid (UDP-alpha-D-ManNAc3NAcA). Exhibits high specificity towards the substrate as UDP-alpha-D-GlcNAc, UDP-alpha-D-GlcNAcA (UDP-2-acetamido-2-deoxy-alpha-D-glucuronic acid) and UDP-alpha-D-GlcNAc3NAc (UDP-2,3-diacetamido-2,3-dideoxy-alpha-D-glucose) cannot act as substrates. This is UDP-2,3-diacetamido-2,3-dideoxy-D-glucuronate 2-epimerase from Pseudomonas aeruginosa (strain ATCC 15692 / DSM 22644 / CIP 104116 / JCM 14847 / LMG 12228 / 1C / PRS 101 / PAO1).